The following is a 77-amino-acid chain: Acyl carrier protein (77 aa).

A Carrier domain is found at 2-77 (STIEERVKKI…EAIDYVVSHQ (76 aa)). O-(pantetheine 4'-phosphoryl)serine is present on serine 37.

The protein belongs to the acyl carrier protein (ACP) family. 4'-phosphopantetheine is transferred from CoA to a specific serine of apo-ACP by AcpS. This modification is essential for activity because fatty acids are bound in thioester linkage to the sulfhydryl of the prosthetic group.

It is found in the cytoplasm. Its pathway is lipid metabolism; fatty acid biosynthesis. In terms of biological role, carrier of the growing fatty acid chain in fatty acid biosynthesis. This Oceanospirillum linum protein is Acyl carrier protein.